The primary structure comprises 282 residues: Trans,polycis-polyprenyl diphosphate synthase ((2Z,6E)-farnesyl diphosphate specific) (282 aa).

Residues 1–30 (MSPKTVFSTDTHREPIPPQPHPSGARPPQL) form a disordered region. Aspartate 44 is an active-site residue. Aspartate 44 is a binding site for Mg(2+). Substrate contacts are provided by residues 45–48 (GNGR), tryptophan 49, arginine 57, histidine 61, and 89–91 (STE). Asparagine 92 serves as the catalytic Proton acceptor. Substrate-binding positions include tryptophan 93, arginine 95, arginine 212, and 218–220 (RLS). A Mg(2+)-binding site is contributed by glutamate 231. The tract at residues 262-282 (GGAEPNPVGPPQSAAGAQGQD) is disordered.

It belongs to the UPP synthase family. Homodimer. Mg(2+) serves as cofactor.

The enzyme catalyses (2Z,6E)-farnesyl diphosphate + 10 isopentenyl diphosphate = di-trans,deca-cis-tridecaprenyl diphosphate + 10 diphosphate. The catalysed reaction is (2Z,6E)-farnesyl diphosphate + 11 isopentenyl diphosphate = di-trans,undeca-cis-tetradecaprenyl diphosphate + 11 diphosphate. It catalyses the reaction (2Z,6E)-farnesyl diphosphate + 9 isopentenyl diphosphate = di-trans,nona-cis-dodecaprenyl diphosphate + 9 diphosphate. Functionally, catalyzes the synthesis of Z,E-mixed prenyl diphosphates by a condensation of isopentenyl diphosphate to an allylic diphosphate. It shows a large substrate specificity accepting dimethylallyl diphosphate (DMAPP), GPP, E,Efarnesyl diphosphate (FPP), E,E,E-geranylgeranyl diphosphate (GGPP), neryl diphosphate (Z-GPP), and (2Z,6E)-farnesyl diphosphate (Z,E-FPP) as allylic substrates. The enzyme exhibits the highest activity when Z,E-FPP is employed as an allylic substrate. The major product is dodecaprenyl diphosphate (C60) under every allylic substrate conditions, but the enzyme is also able to synthesize even C70 prenyl diphosphate as the maximum chain-length product. This is Trans,polycis-polyprenyl diphosphate synthase ((2Z,6E)-farnesyl diphosphate specific) from Thermobifida fusca (strain YX).